Consider the following 558-residue polypeptide: uncharacterized protein (558 aa).

The interval 396–420 is disordered; that stretch reads SSITDNDTDNDSGATESQQTDSEND. Residues 407 to 416 are compositionally biased toward polar residues; it reads SGATESQQTD.

The protein belongs to the chlamydial CPn_0065/CT_288/TC_0561 family.

This is an uncharacterized protein from Chlamydia muridarum (strain MoPn / Nigg).